Reading from the N-terminus, the 336-residue chain is Carbamoyl dehydratase HypE (336 aa).

Position 336 is an S-carbamoylcysteine; by HypF; alternate (Cys-336). Cys-336 bears the S-cyanocysteine; by autocatalysis; alternate mark.

Belongs to the HypE family. In terms of assembly, homodimer. Forms a complex with HypF. Also forms a complex with HypC, or HybG, and HypD. In terms of processing, modified by HypF, which adds a carboxamido group to the thiolate of the C-terminal cysteine, yielding a protein-S-carboxamide. The carboxamido group is then dehydrated by HypE itself to yield a protein-thiocyanate.

The catalysed reaction is C-terminal S-carboxamide-L-cysteinyl-[HypE protein] + ATP = C-terminal S-cyanate-L-cysteinyl-[HypE protein] + ADP + phosphate + H(+). Its pathway is protein modification; [NiFe] hydrogenase maturation. In terms of biological role, involved in the maturation of [NiFe] hydrogenases. Along with HypF, it catalyzes the synthesis of the CN ligands of the active site iron of [NiFe]-hydrogenases. HypE catalyzes the ATP-dependent dehydration of the carboxamido group attached to its C-terminal cysteine to a cyano group. The cyano group is then transferred from HypE to the HypC-HypD complex or the HybG-HypD complex. The polypeptide is Carbamoyl dehydratase HypE (Escherichia coli (strain K12)).